Consider the following 430-residue polypeptide: Adenylosuccinate synthetase (430 aa).

GTP-binding positions include 12-18 and 40-42; these read GDEGKGK and GHT. Residue Asp-13 is the Proton acceptor of the active site. Positions 13 and 40 each coordinate Mg(2+). IMP is bound by residues 13-16, 38-41, Thr-130, Arg-144, Gln-224, Thr-239, and Arg-303; these read DEGK and NAGH. Residue His-41 is the Proton donor of the active site. Residue 299–305 participates in substrate binding; that stretch reads VNTGRKR. Residues Arg-305, 331–333, and 413–415 contribute to the GTP site; these read KLD and STS.

Belongs to the adenylosuccinate synthetase family. Homodimer. Requires Mg(2+) as cofactor.

It is found in the cytoplasm. It catalyses the reaction IMP + L-aspartate + GTP = N(6)-(1,2-dicarboxyethyl)-AMP + GDP + phosphate + 2 H(+). It participates in purine metabolism; AMP biosynthesis via de novo pathway; AMP from IMP: step 1/2. Its function is as follows. Plays an important role in the de novo pathway of purine nucleotide biosynthesis. Catalyzes the first committed step in the biosynthesis of AMP from IMP. This chain is Adenylosuccinate synthetase, found in Nitrobacter winogradskyi (strain ATCC 25391 / DSM 10237 / CIP 104748 / NCIMB 11846 / Nb-255).